The chain runs to 526 residues: MTKIERALISVSDKTGILEFARGLAAHGVEILSTGGTAKLLADNNVPVIEVADYTGFPEMLDGRVKTLHPKIHGGILGRRDLPEHVAKMAEHGIGNIDLVCVNLYPFEATIAKEGCALEDAIENIDIGGPTMVRSAAKNWAHVAIVTDAADYPALLEEMGANAGALSRATRFDLSRKAFTHTAAYDGAISNYLTAVQADQGLAGEPVRTLFPTRLNLQVVKVQDMRYGENPHQSAAFYRDLDPAPGTLAHYRQLQGKELSYNNIADSDAAWEAVKTFDDPACVIVKHANPCGVAVAADPLSAYRLAFATDTTSAFGGIIAFNREVDAATVEAVSAQFLEVLIAPAFTDDAKALIAAKKNVRVLEVPVEAGANRFELKRVGGGLLVQTPDIKNVTLDELKVVTKAQPTRQQLADLLFAWRVAKFVKSNAIVFAAGGQTAGIGAGQMSRVDSTRIAARKAQDAGLSLKNAVAASDAFFPFRDGVDVIAEQGISAIIQPGGSMRDEEVIKAADEHGIAMVFTGNRHFRH.

One can recognise an MGS-like domain in the interval 1–147 (MTKIERALIS…KNWAHVAIVT (147 aa)).

This sequence belongs to the PurH family.

It catalyses the reaction (6R)-10-formyltetrahydrofolate + 5-amino-1-(5-phospho-beta-D-ribosyl)imidazole-4-carboxamide = 5-formamido-1-(5-phospho-D-ribosyl)imidazole-4-carboxamide + (6S)-5,6,7,8-tetrahydrofolate. The enzyme catalyses IMP + H2O = 5-formamido-1-(5-phospho-D-ribosyl)imidazole-4-carboxamide. The protein operates within purine metabolism; IMP biosynthesis via de novo pathway; 5-formamido-1-(5-phospho-D-ribosyl)imidazole-4-carboxamide from 5-amino-1-(5-phospho-D-ribosyl)imidazole-4-carboxamide (10-formyl THF route): step 1/1. It functions in the pathway purine metabolism; IMP biosynthesis via de novo pathway; IMP from 5-formamido-1-(5-phospho-D-ribosyl)imidazole-4-carboxamide: step 1/1. The protein is Bifunctional purine biosynthesis protein PurH of Laribacter hongkongensis (strain HLHK9).